The following is a 1645-amino-acid chain: Cortactin-binding protein 2 (1645 aa).

5 disordered regions span residues 1–28 (MATD…EAAK), 269–293 (LKRG…SVSI), 366–435 (IVSS…AALH), 451–478 (GNAN…SRDS), and 492–612 (ALSR…PPKP). Positions 119 to 276 (RKMQERMSTQ…EQLKRGNDSK (158 aa)) form a coiled coil. Composition is skewed to polar residues over residues 407-417 (QTPTIAPQSHA) and 451-477 (GNAN…TSRD). Arg-495 is subject to Asymmetric dimethylarginine. Over residues 580 to 590 (TMASPPSTLPQ) the composition is skewed to polar residues. ANK repeat units lie at residues 706–736 (GRPT…DINY), 740–769 (DGHS…QVNA), 773–802 (NGFT…NINH), 806–835 (EGQT…DRSV), 839–868 (DGWT…PARR), and 909–939 (EGWT…EPER). The tract at residues 868 to 898 (RNSLHEEEPESGVFDLDQGEESPEGTSKPVI) is disordered. The tract at residues 1442-1479 (CSRKKGESGAWRKVSTSPRKKSGRFSPPSWSKPGPSEE) is disordered. Ser-1521 is subject to Phosphoserine. The interval 1551–1645 (DDLRSFDSPG…EINNNSKEEI (95 aa)) is disordered. Composition is skewed to polar residues over residues 1558 to 1569 (SPGNSPAFSATV) and 1582 to 1597 (PFSS…SQSK). Over residues 1620–1634 (SQNTKRSSSSSNTRQ) the composition is skewed to low complexity. The span at 1635–1645 (IEINNNSKEEI) shows a compositional bias: polar residues.

As to quaternary structure, interacts with CTTN/cortactin SH3 domain. Interacts with STRN, STRN4/zinedin and MOB4/phocein; this interactions mediate the association with the STRIPAK core complex and may regulate dendritic spine distribution of the STRIPAK complex in hippocampal neurons. Activation of glutamate receptors weakens the interaction with STRN and STRN4.

It is found in the cytoplasm. Its subcellular location is the cell cortex. It localises to the cell projection. The protein localises to the dendritic spine. In terms of biological role, regulates the dendritic spine distribution of CTTN/cortactin in hippocampal neurons, and thus controls dendritic spinogenesis and dendritic spine maintenance. Associates with the striatin-interacting phosphatase and kinase (STRIPAK) core complex to regulate dendritic spine distribution of the STRIPAK complex in hippocampal neurons. The polypeptide is Cortactin-binding protein 2 (CTTNBP2) (Mustela putorius furo (European domestic ferret)).